We begin with the raw amino-acid sequence, 475 residues long: ISWI one complex protein 4 (475 aa).

Ser2 bears the Phosphoserine mark. A Phosphothreonine modification is found at Thr9. Disordered regions lie at residues 42-84, 181-296, and 454-475; these read VSVH…DFGE, EEEY…IKYH, and EMDR…KVGA. 2 positions are modified to phosphoserine: Ser65 and Ser73. 3 stretches are compositionally biased toward acidic residues: residues 72–84, 181–193, and 241–252; these read QSEE…DFGE, EEEY…EENE, and ASEEEEEEEEEK. A Phosphoserine modification is found at Ser242. Over residues 259–294 the composition is skewed to basic residues; it reads KRPQRTKTKKVVVSKTKPNPKTKAKKEKPKPPKPIK. A compositionally biased stretch (basic and acidic residues) spans 456–475; that stretch reads DREKPSFSEDVKEEESKVGA.

In terms of assembly, component of the ISW1B complex, which at least consists of ISW1, IOC2 and IOC4.

Its subcellular location is the nucleus. Functions as a component of the ISW1B complex, which acts in remodeling the chromatin by catalyzing an ATP-dependent alteration in the structure of nucleosomal DNA. The ISW1B complex acts within coding regions to control the amount of RNA polymerase II released into productive elongation and to coordinate elongation with termination and pre-mRNA processing. This chain is ISWI one complex protein 4 (IOC4), found in Saccharomyces cerevisiae (strain ATCC 204508 / S288c) (Baker's yeast).